A 259-amino-acid polypeptide reads, in one-letter code: Sugar fermentation stimulation protein homolog (259 aa).

The protein belongs to the SfsA family.

The sequence is that of Sugar fermentation stimulation protein homolog from Prochlorococcus marinus (strain MIT 9303).